The sequence spans 495 residues: Sialin (495 aa).

The tract at residues 1–24 is disordered; it reads MKSPVSDLAPSDGEEGSDRTPLLQ. The residue at position 3 (S3) is a Phosphoserine. A Dileucine internalization motif motif is present at residues 22–23; it reads LL. The chain crosses the membrane as a helical span at residues 42-62; sequence LAFLSFFGFFVLYSLRVNLSV. N71, N77, and N95 each carry an N-linked (GlcNAc...) asparagine glycan. Transmembrane regions (helical) follow at residues 110–130, 137–157, 159–179, 201–221, 228–248, 289–309, 329–349, 366–386, 392–412, 424–444, and 458–478; these read WILGSFFYGYIITQIPGGYVA, LLLGFGIFATAIFTLFTPLAA, FGVGALVALRALEGLGEGVTY, ISYAGAQLGTVVSLPLSGVIC, YVFYFFGIVGIIWFILWICLV, LPLWAIVVAHFSYNWTFYTLL, FLSAVPYLGCWLCMILSGQAA, VFSLIGMIGPAIFLVAAGFIG, AVAFLTISTTLGGFCSSGFSI, ILLGITNTFATIPGMIGPIIA, and TVFCIAAAINVFGAIFFTLFA.

Belongs to the major facilitator superfamily. Sodium/anion cotransporter family. Significantly expressed in lung endothelial cells, and much less in liver.

Its subcellular location is the basolateral cell membrane. The protein resides in the cytoplasmic vesicle. It localises to the secretory vesicle. The protein localises to the synaptic vesicle membrane. It is found in the lysosome membrane. The catalysed reaction is N-acetylneuraminate(in) + H(+)(in) = N-acetylneuraminate(out) + H(+)(out). It catalyses the reaction D-glucuronate(out) + H(+)(out) = D-glucuronate(in) + H(+)(in). The enzyme catalyses 2 nitrate(out) + H(+)(out) = 2 nitrate(in) + H(+)(in). It carries out the reaction L-aspartate(out) = L-aspartate(in). The catalysed reaction is L-glutamate(out) = L-glutamate(in). It catalyses the reaction N-acetyl-L-aspartyl-L-glutamate(out) = N-acetyl-L-aspartyl-L-glutamate(in). In terms of biological role, multifunctional anion transporter that operates via two distinct transport mechanisms, namely proton-coupled anion cotransport and membrane potential-dependent anion transport. Electroneutral proton-coupled acidic monosaccharide symporter, with a sugar to proton stoichiometry of 1:1. Exports glucuronic acid and free sialic acid derived from sialoglycoconjugate degradation out of lysosomes, driven by outwardly directed lysosomal pH gradient. May regulate lysosome function and metabolism of sialylated conjugates that impact oligodendrocyte lineage differentiation and myelinogenesis in the central nervous system. Electrogenic proton-coupled nitrate symporter that transports nitrate ions across the basolateral membrane of salivary gland acinar cells, with nitrate to proton stoichiometry of 2:1. May contribute to nitrate clearance from serum by salivary glands, where it is further concentrated and secreted in the saliva. Uses membrane potential to drive the uptake of acidic amino acids and peptides into synaptic vesicles. Responsible for synaptic vesicular storage of L-aspartate and L-glutamate in pinealocytes as well as vesicular uptake of N-acetyl-L-aspartyl-L-glutamate neuropeptide, relevant to aspartegic-associated glutamatergic neurotransmission and activation of metabotropic receptors that inhibit subsequent transmitter release. Functionally, receptor for CM101, a polysaccharide produced by group B Streptococcus with antipathoangiogenic properties. The chain is Sialin (SLC17A5) from Ovis aries (Sheep).